The following is a 1194-amino-acid chain: Protein argonaute 3 (1194 aa).

Over residues 1–98 (MDRGGYRGGR…GRGGGGDRGR (98 aa)) the composition is skewed to basic and acidic residues. Disordered stretches follow at residues 1 to 277 (MDRG…VSQS) and 299 to 341 (TVLP…DKGG). Residues 142–158 (PPSSSQAQVSQGVAPGD) are compositionally biased toward low complexity. Residues 167–180 (VGRDGVGDVGRDGV) are compositionally biased toward basic and acidic residues. Residues 181 to 214 (GDVGQGGVGDVGQVGVGDVGQGGVGDVGQGGVGD) are compositionally biased toward gly residues. Residues 215 to 228 (VGRDGVGDVGRDGV) are compositionally biased toward basic and acidic residues. Gly residues predominate over residues 229–238 (GDVGRGGVGD). 2 stretches are compositionally biased toward low complexity: residues 256 to 277 (QLQQ…VSQS) and 299 to 316 (TVLP…HTAS). Over residues 317-326 (GSQVMTPKPS) the composition is skewed to polar residues. Over residues 327 to 341 (SSDKKEPVKRPDKGG) the composition is skewed to basic and acidic residues. In terms of domain architecture, PAZ spans 540–656 (SVIEYLKLYF…VPMEFCNLVE (117 aa)). The Piwi domain maps to 841–1145 (LVLCAMTGKH…AASRGRVYYE (305 aa)).

It belongs to the argonaute family. Ago subfamily.

In terms of biological role, involved in RNA-mediated post-transcriptional gene silencing (PTGS). Main component of the RNA-induced silencing complex (RISC) that binds to a short guide RNA such as a microRNA (miRNA) or small interfering RNA (siRNA). RISC uses the mature miRNA or siRNA as a guide for slicer-directed cleavage of homologous mRNAs to repress gene expression. The polypeptide is Protein argonaute 3 (AGO3) (Arabidopsis thaliana (Mouse-ear cress)).